A 606-amino-acid polypeptide reads, in one-letter code: NADH-ubiquinone oxidoreductase chain 5 (606 aa).

The next 15 helical transmembrane spans lie at 3–23 (VINL…LPIT), 38–58 (ITKM…LLFL), 87–107 (FFSL…MEFS), 124–144 (LLLF…LQLF), 180–200 (IGDM…NSWE), 216–236 (LLGL…HPWL), 244–264 (TPVS…FTLI), 276–296 (IQTS…ICAL), 304–323 (IIAL…IGIN), 328–350 (AFTH…GSII), 369–389 (MPIT…MPFL), 404–424 (MSYI…MTAS), 460–480 (LILG…PHTT), 483–503 (MTMP…GFTV), and 586–606 (LMKL…LITL).

This sequence belongs to the complex I subunit 5 family. As to quaternary structure, core subunit of respiratory chain NADH dehydrogenase (Complex I) which is composed of 45 different subunits.

It is found in the mitochondrion inner membrane. The enzyme catalyses a ubiquinone + NADH + 5 H(+)(in) = a ubiquinol + NAD(+) + 4 H(+)(out). Functionally, core subunit of the mitochondrial membrane respiratory chain NADH dehydrogenase (Complex I) which catalyzes electron transfer from NADH through the respiratory chain, using ubiquinone as an electron acceptor. Essential for the catalytic activity and assembly of complex I. The sequence is that of NADH-ubiquinone oxidoreductase chain 5 (MT-ND5) from Elephas maximus (Indian elephant).